Reading from the N-terminus, the 472-residue chain is L-aspartate oxidase (472 aa).

Residues 7 to 10 (SGIA), serine 29, 36 to 37 (ST), 42 to 43 (GG), and aspartate 191 contribute to the FAD site. Residue arginine 257 is the Proton donor/acceptor of the active site. FAD is bound by residues glutamate 337 and 353 to 354 (SL).

It belongs to the FAD-dependent oxidoreductase 2 family. NadB subfamily. As to quaternary structure, monomer. It depends on FAD as a cofactor.

It localises to the cytoplasm. The catalysed reaction is L-aspartate + O2 = iminosuccinate + H2O2. It participates in cofactor biosynthesis; NAD(+) biosynthesis; iminoaspartate from L-aspartate (oxidase route): step 1/1. Its function is as follows. Catalyzes the oxidation of L-aspartate to iminoaspartate, the first step in the de novo biosynthesis of NAD(+). Can also use L-asparagine, but not L-phenylalanine, L-glutamate, glycine, L-proline, L-alanine and D-aspartate. In Sulfurisphaera tokodaii (strain DSM 16993 / JCM 10545 / NBRC 100140 / 7) (Sulfolobus tokodaii), this protein is L-aspartate oxidase.